Reading from the N-terminus, the 920-residue chain is Isoleucine--tRNA ligase (920 aa).

A 'HIGH' region motif is present at residues 58 to 68 (PYANGHLHLGH). Glu-569 contacts L-isoleucyl-5'-AMP. Residues 610–614 (KMSKS) carry the 'KMSKS' region motif. Lys-613 lines the ATP pocket. Residues Cys-895, Cys-898, Cys-910, and Cys-913 each coordinate Zn(2+).

It belongs to the class-I aminoacyl-tRNA synthetase family. IleS type 1 subfamily. In terms of assembly, monomer. The cofactor is Zn(2+).

The protein resides in the cytoplasm. The catalysed reaction is tRNA(Ile) + L-isoleucine + ATP = L-isoleucyl-tRNA(Ile) + AMP + diphosphate. Its function is as follows. Catalyzes the attachment of isoleucine to tRNA(Ile). As IleRS can inadvertently accommodate and process structurally similar amino acids such as valine, to avoid such errors it has two additional distinct tRNA(Ile)-dependent editing activities. One activity is designated as 'pretransfer' editing and involves the hydrolysis of activated Val-AMP. The other activity is designated 'posttransfer' editing and involves deacylation of mischarged Val-tRNA(Ile). The protein is Isoleucine--tRNA ligase of Helicobacter pylori (strain Shi470).